We begin with the raw amino-acid sequence, 189 residues long: Probable nicotinate-nucleotide adenylyltransferase (189 aa).

It belongs to the NadD family.

It catalyses the reaction nicotinate beta-D-ribonucleotide + ATP + H(+) = deamido-NAD(+) + diphosphate. The protein operates within cofactor biosynthesis; NAD(+) biosynthesis; deamido-NAD(+) from nicotinate D-ribonucleotide: step 1/1. In terms of biological role, catalyzes the reversible adenylation of nicotinate mononucleotide (NaMN) to nicotinic acid adenine dinucleotide (NaAD). This chain is Probable nicotinate-nucleotide adenylyltransferase, found in Bacillus cereus (strain ATCC 10987 / NRS 248).